The sequence spans 179 residues: MGLTISKLFASLLGRREMRILMVGLDAAGKTTILYKLKLGEIVTTIPTIGFNVETVEYKNISFTVWDVGGQDKIRPLWRYYFQNTQGIIFVVDSNDRDRINEAREELQSMLNEDELKDAVLLVLANKQDLPNAMNAAEITEKMGLHSIRNRPWFIQATCATTGDGLYEGLEWLSNQVGK.

Gly-2 carries N-myristoyl glycine lipidation. GTP is bound by residues 24-31 (GLDAAGKT), 67-71 (DVGGQ), and 126-129 (NKQD).

It belongs to the small GTPase superfamily. Arf family.

The protein localises to the golgi apparatus. In terms of biological role, GTP-binding protein involved in protein trafficking; may modulate vesicle budding and uncoating within the Golgi apparatus. This is ADP-ribosylation factor (ARF1) from Candida albicans (strain SC5314 / ATCC MYA-2876) (Yeast).